We begin with the raw amino-acid sequence, 276 residues long: Dermonecrotic toxin LlSicTox-alphaIV1i (276 aa).

The active site involves His-5. Mg(2+)-binding residues include Glu-25 and Asp-27. His-41 serves as the catalytic Nucleophile. 2 disulfides stabilise this stretch: Cys-45/Cys-51 and Cys-47/Cys-193. Asp-85 lines the Mg(2+) pocket.

The protein belongs to the arthropod phospholipase D family. Class II subfamily. It depends on Mg(2+) as a cofactor. Expressed by the venom gland.

The protein localises to the secreted. It carries out the reaction an N-(acyl)-sphingosylphosphocholine = an N-(acyl)-sphingosyl-1,3-cyclic phosphate + choline. The catalysed reaction is an N-(acyl)-sphingosylphosphoethanolamine = an N-(acyl)-sphingosyl-1,3-cyclic phosphate + ethanolamine. It catalyses the reaction a 1-acyl-sn-glycero-3-phosphocholine = a 1-acyl-sn-glycero-2,3-cyclic phosphate + choline. The enzyme catalyses a 1-acyl-sn-glycero-3-phosphoethanolamine = a 1-acyl-sn-glycero-2,3-cyclic phosphate + ethanolamine. Functionally, dermonecrotic toxins cleave the phosphodiester linkage between the phosphate and headgroup of certain phospholipids (sphingolipid and lysolipid substrates), forming an alcohol (often choline) and a cyclic phosphate. This toxin acts on sphingomyelin (SM). It may also act on ceramide phosphoethanolamine (CPE), lysophosphatidylcholine (LPC) and lysophosphatidylethanolamine (LPE), but not on lysophosphatidylserine (LPS), and lysophosphatidylglycerol (LPG). It acts by transphosphatidylation, releasing exclusively cyclic phosphate products as second products. Induces dermonecrosis, hemolysis, increased vascular permeability, edema, inflammatory response, and platelet aggregation. The chain is Dermonecrotic toxin LlSicTox-alphaIV1i from Loxosceles laeta (South American recluse spider).